The chain runs to 367 residues: 2,6-dihydropseudooxynicotine hydrolase (367 aa).

Catalysis depends on residues Glu148, Ser217, Asp300, and His329.

This sequence belongs to the AB hydrolase superfamily. In terms of assembly, homodimer.

It catalyses the reaction 2,6-dihydroxypseudooxynicotine + H2O = 2,6-dihydroxypyridine + 4-(methylamino)butanoate + H(+). The protein operates within alkaloid degradation; nicotine degradation; 2,6-dihydroxypyridine and 4-(methylamino)butanoate from 6-hydroxypseudooxynicotine: step 2/2. Functionally, L-nicotine is used as a growth substrate. Plays a role in nicotine catabolism by cleaving a C-C bond in 2,6-dihydroxypseudooxynicotine. This is 2,6-dihydropseudooxynicotine hydrolase from Paenarthrobacter nicotinovorans (Arthrobacter nicotinovorans).